We begin with the raw amino-acid sequence, 65 residues long: Muscarinic toxin-like protein 2 (65 aa).

Disulfide bonds link Cys-3-Cys-24, Cys-17-Cys-42, Cys-46-Cys-57, and Cys-58-Cys-63.

This sequence belongs to the three-finger toxin family. Short-chain subfamily. Type C muscarinic toxin sub-subfamily. As to quaternary structure, monomer. As to expression, expressed by the venom gland.

The protein resides in the secreted. In Naja kaouthia (Monocled cobra), this protein is Muscarinic toxin-like protein 2.